The chain runs to 162 residues: Interleukin-2 (162 aa).

Residues 1–20 form the signal peptide; that stretch reads MYKIQLLSCIALTLALVANG. Threonine 23 carries an O-linked (GalNAc...) threonine glycan. A glycan (N-linked (GlcNAc...) asparagine) is linked at asparagine 70. An intrachain disulfide couples cysteine 79 to cysteine 134.

Belongs to the IL-2 family.

The protein localises to the secreted. In terms of biological role, cytokine produced by activated CD4-positive helper T-cells and to a lesser extend activated CD8-positive T-cells and natural killer (NK) cells that plays pivotal roles in the immune response and tolerance. Binds to a receptor complex composed of either the high-affinity trimeric IL-2R (IL2RA/CD25, IL2RB/CD122 and IL2RG/CD132) or the low-affinity dimeric IL-2R (IL2RB and IL2RG). Interaction with the receptor leads to oligomerization and conformation changes in the IL-2R subunits resulting in downstream signaling starting with phosphorylation of JAK1 and JAK3. In turn, JAK1 and JAK3 phosphorylate the receptor to form a docking site leading to the phosphorylation of several substrates including STAT5. This process leads to activation of several pathways including STAT, phosphoinositide-3-kinase/PI3K and mitogen-activated protein kinase/MAPK pathways. Functions as a T-cell growth factor and can increase NK-cell cytolytic activity as well. Promotes strong proliferation of activated B-cells and subsequently immunoglobulin production. Plays a pivotal role in regulating the adaptive immune system by controlling the survival and proliferation of regulatory T-cells, which are required for the maintenance of immune tolerance. Moreover, participates in the differentiation and homeostasis of effector T-cell subsets, including Th1, Th2, Th17 as well as memory CD8-positive T-cells. This Cervus elaphus (Red deer) protein is Interleukin-2 (IL2).